Here is a 194-residue protein sequence, read N- to C-terminus: uncharacterized protein (194 aa).

The tract at residues 25 to 156 is disordered; that stretch reads PSWACRRGGP…ESPLGTLPCS (132 aa). Polar residues predominate over residues 43–57; sequence GPSTVPVTPTAGSCQ. Low complexity predominate over residues 104 to 113; sequence SSSPGPSFHL.

This is an uncharacterized protein from Homo sapiens (Human).